Here is a 723-residue protein sequence, read N- to C-terminus: Methionine--tRNA ligase (723 aa).

Positions proline 11–histidine 21 match the 'HIGH' region motif. 4 residues coordinate Zn(2+): cysteine 143, cysteine 146, cysteine 156, and cysteine 159. Positions lysine 344–serine 348 match the 'KMSKS' region motif. An ATP-binding site is contributed by threonine 347. Residues aspartate 623–arginine 723 form the tRNA-binding domain.

The protein belongs to the class-I aminoacyl-tRNA synthetase family. MetG type 1 subfamily. In terms of assembly, homodimer. The cofactor is Zn(2+).

The protein resides in the cytoplasm. It catalyses the reaction tRNA(Met) + L-methionine + ATP = L-methionyl-tRNA(Met) + AMP + diphosphate. Its function is as follows. Is required not only for elongation of protein synthesis but also for the initiation of all mRNA translation through initiator tRNA(fMet) aminoacylation. This Pyrococcus horikoshii (strain ATCC 700860 / DSM 12428 / JCM 9974 / NBRC 100139 / OT-3) protein is Methionine--tRNA ligase.